Here is a 170-residue protein sequence, read N- to C-terminus: dCTP pyrophosphatase 1 (170 aa).

Positions 1-25 (MSQAGTGVCGNGGQEDSAAAGPFSF) are disordered. Position 2 is an N-acetylserine (Ser2). Ser2 bears the Phosphoserine mark. Residues His38 and 47–51 (WEQFH) each bind substrate. 2 residues coordinate Mg(2+): Glu63 and Glu66. Substrate is bound at residue Trp73. Residues Glu95 and Asp98 each coordinate Mg(2+). Tyr102 provides a ligand contact to substrate. The interval 149-170 (LSENEAVGSGDPASELGNQAST) is disordered.

In terms of assembly, homotetramer. It depends on Mg(2+) as a cofactor.

The protein resides in the cytoplasm. The protein localises to the cytosol. It catalyses the reaction dCTP + H2O = dCMP + diphosphate + H(+). Hydrolyzes deoxynucleoside triphosphates (dNTPs) to the corresponding nucleoside monophosphates. Has a strong preference for dCTP and its analogs including 5-iodo-dCTP and 5-methyl-dCTP for which it may even have a higher efficiency. May protect DNA or RNA against the incorporation of these genotoxic nucleotide analogs through their catabolism. This is dCTP pyrophosphatase 1 from Rattus norvegicus (Rat).